A 590-amino-acid polypeptide reads, in one-letter code: Pescadillo homolog (590 aa).

The region spanning 332–422 (VCKSLFKDLK…IILPTEKYLV (91 aa)) is the BRCT domain. A disordered region spans residues 561 to 590 (AMKISQSRKRSGVEIIEQRKKRLNDTQPSS).

The protein belongs to the pescadillo family. As to quaternary structure, interacts with BOP1 and WDR12. Interacts with NSN1. As to expression, expressed in shoot and root apical meristems, epidermal cells and vasculature of developing leaves, trichome progenitor cells, young flowers, developing pollen grains and ovules, and mature pollen grains.

The protein localises to the nucleus. It is found in the nucleolus. The protein resides in the nucleoplasm. Required for maturation of ribosomal RNAs and formation of the large ribosomal subunit. Plays an essential role in cell growth and survival through its regulation of ribosome biogenesis and mitotic progression. Required for normal root cell growth and differentiation. This Arabidopsis thaliana (Mouse-ear cress) protein is Pescadillo homolog.